The sequence spans 37 residues: Large ribosomal subunit protein bL36B (37 aa).

It belongs to the bacterial ribosomal protein bL36 family.

The chain is Large ribosomal subunit protein bL36B from Saccharopolyspora erythraea (strain ATCC 11635 / DSM 40517 / JCM 4748 / NBRC 13426 / NCIMB 8594 / NRRL 2338).